The sequence spans 134 residues: Small ribosomal subunit protein uS11 (134 aa).

The disordered stretch occupies residues 114-134; it reads TPVPHNGTRPPRKWFKRQEKR. The span at 123–134 shows a compositional bias: basic residues; that stretch reads PPRKWFKRQEKR.

It belongs to the universal ribosomal protein uS11 family. As to quaternary structure, part of the 30S ribosomal subunit. Interacts with proteins S7 and S18. Binds to IF-3.

Its function is as follows. Located on the platform of the 30S subunit, it bridges several disparate RNA helices of the 16S rRNA. Forms part of the Shine-Dalgarno cleft in the 70S ribosome. The sequence is that of Small ribosomal subunit protein uS11 from Mesomycoplasma hyopneumoniae (strain 232) (Mycoplasma hyopneumoniae).